The sequence spans 656 residues: Pyoverdine export ATP-binding/permease protein PvdT (656 aa).

Residues 6 to 245 enclose the ABC transporter domain; sequence IDLRAIRKSY…SANPAALQAV (240 aa). 43 to 50 provides a ligand contact to ATP; the sequence is GASGSGKS. Helical transmembrane passes span 284-304, 538-558, 589-609, and 619-639; these read ALTL…LAVG, IAAI…LMTV, LSVV…AALL, and VPAV…FGFM.

It belongs to the ABC transporter superfamily. Macrolide exporter (TC 3.A.1.122) family. In terms of assembly, part of the tripartite efflux system PvdRT-OpmQ, which is composed of an inner membrane component with both ATPase and permease domains, PvdT, a periplasmic membrane fusion protein, PvdR, and an outer membrane component, OpmQ.

It localises to the cell inner membrane. Part of the tripartite efflux system PvdRT-OpmQ required for the secretion into the extracellular milieu of the siderophore pyoverdine (PVD), which is involved in iron acquisition. This subunit binds PVD and drives its secretion by hydrolyzing ATP. The system is responsible for export of newly synthesized PVD after the final steps of biosynthesis have taken place in the periplasm. It is also responsible for recycling of PVD after internalization of ferri-PVD into the periplasm by the outer-membrane receptor FpvA and release of iron from PVD, thus making PVD available for new cycles of iron uptake. This is Pyoverdine export ATP-binding/permease protein PvdT from Pseudomonas savastanoi pv. phaseolicola (strain 1448A / Race 6) (Pseudomonas syringae pv. phaseolicola (strain 1448A / Race 6)).